We begin with the raw amino-acid sequence, 681 residues long: PTS system glucose-specific EIICBA component (681 aa).

In terms of domain architecture, PTS EIIC type-1 spans 3–414 (KKLFGQLQRI…LKYKTPGRED (412 aa)). A run of 10 helical transmembrane segments spans residues 16 to 36 (LMLP…GTAM), 73 to 93 (MIFA…AAIA), 126 to 146 (ILGI…GALA), 170 to 190 (FVPI…ALIW), 199 to 219 (AFST…FGFI), 273 to 293 (FMQG…LAIY), 303 to 323 (VVAG…ITEP), 328 to 348 (FLFV…LSFL), 355 to 375 (LHLG…GILP), and 383 to 403 (VIPV…FLIV). One can recognise a PTS EIIB type-1 domain in the interval 425-506 (TELPYAVLEA…QQIMNGQVVE (82 aa)). The Phosphocysteine intermediate; for EIIB activity role is filled by C447. Positions 551–655 (DQVFSEKMMG…SDITPIIVTQ (105 aa)) constitute a PTS EIIA type-1 domain. Catalysis depends on H603, which acts as the Tele-phosphohistidine intermediate; for EIIA activity.

It is found in the cell membrane. The enzyme catalyses N(pros)-phospho-L-histidyl-[protein] + D-glucose(out) = D-glucose 6-phosphate(in) + L-histidyl-[protein]. The phosphoenolpyruvate-dependent sugar phosphotransferase system (sugar PTS), a major carbohydrate active transport system, catalyzes the phosphorylation of incoming sugar substrates concomitantly with their translocation across the cell membrane. This system is involved in glucose transport. This Staphylococcus aureus (strain MRSA252) protein is PTS system glucose-specific EIICBA component (ptsG).